The chain runs to 523 residues: Cytochrome P450 52-N1 (523 aa).

The chain crosses the membrane as a helical span at residues 5 to 25; the sequence is AVLGAFAAFLLYMDVLYPFVI. Cysteine 469 serves as a coordination point for heme.

It belongs to the cytochrome P450 family. Heme is required as a cofactor.

It localises to the membrane. The enzyme catalyses an omega-methyl-long-chain fatty acid + reduced [NADPH--hemoprotein reductase] + O2 = an omega-hydroxy-long-chain fatty acid + oxidized [NADPH--hemoprotein reductase] + H2O + H(+). It catalyses the reaction (9Z,12Z)-octadecadienoate + reduced [NADPH--hemoprotein reductase] + O2 = 18-hydroxy-(9Z,12Z)-octadecadienoate + oxidized [NADPH--hemoprotein reductase] + H2O + H(+). It carries out the reaction (9Z)-octadecenoate + reduced [NADPH--hemoprotein reductase] + O2 = 18-hydroxy-(9Z)-octadecenoate + oxidized [NADPH--hemoprotein reductase] + H2O + H(+). The catalysed reaction is hexadecanoate + reduced [NADPH--hemoprotein reductase] + O2 = 16-hydroxyhexadecanoate + oxidized [NADPH--hemoprotein reductase] + H2O + H(+). The enzyme catalyses (9Z)-hexadecenoate + reduced [NADPH--hemoprotein reductase] + O2 = (9Z)-16-hydroxyhexadec-9-enoate + oxidized [NADPH--hemoprotein reductase] + H2O + H(+). It catalyses the reaction octadecanoate + reduced [NADPH--hemoprotein reductase] + O2 = 18-hydroxyoctadecanoate + oxidized [NADPH--hemoprotein reductase] + H2O + H(+). Its function is as follows. Catalyzes the terminal (at the omega-position) hydroxylation of a fatty acid. Probably involved in alkane metabolism. Linoleic acid is the preferred substrate, but it acts on various other C-16, C-18 and C-20 saturated and unsaturated fatty acids, namely palmitic, palmitoleic, stearic, oleic, alpha-linoleic, arachidonic and myristic acid. The chain is Cytochrome P450 52-N1 from Starmerella bombicola (Yeast).